Reading from the N-terminus, the 371-residue chain is Alanine dehydrogenase (371 aa).

Substrate is bound by residues arginine 15 and lysine 75. Histidine 96 (proton donor/acceptor) is an active-site residue. NAD(+) is bound by residues serine 134, 178–179, aspartate 198, serine 220, 239–240, 267–270, arginine 279, and 298–301; these read TA, VL, IAID, and VANM. Catalysis depends on aspartate 270, which acts as the Proton donor/acceptor.

The protein belongs to the AlaDH/PNT family. In terms of assembly, homohexamer. Trimer of dimers.

The protein localises to the cytoplasm. The catalysed reaction is L-alanine + NAD(+) + H2O = pyruvate + NH4(+) + NADH + H(+). It participates in amino-acid degradation; L-alanine degradation via dehydrogenase pathway; NH(3) and pyruvate from L-alanine: step 1/1. In terms of biological role, catalyzes the reversible reductive amination of pyruvate to L-alanine. Required for proficient utilization of D- or L-alanine as a nitrogen source. May be required for the adaptation from aerobic growth to anaerobic dormancy. It could be involved in the maintenance of the NAD pool during the shift to an anaerobic dormant state in which oxygen as a terminal electron acceptor becomes limiting. This chain is Alanine dehydrogenase, found in Mycolicibacterium smegmatis (strain ATCC 700084 / mc(2)155) (Mycobacterium smegmatis).